Consider the following 434-residue polypeptide: Citrate-proton symporter (434 aa).

Residues 1-21 (MAQHTPATSRAGTFGAILRVT) lie on the Cytoplasmic side of the membrane. The helical transmembrane segment at 22 to 42 (SGNFLEQFDFFLFGFYATYIA) threads the bilayer. The Periplasmic segment spans residues 43-54 (RTFFPAESEFAS). A helical transmembrane segment spans residues 55–75 (LMLTFAVFGSGFLMRPVGAIV). At 76–87 (LGAYIDRIGRRK) the chain is on the cytoplasmic side. A helical transmembrane segment spans residues 88 to 108 (GLMVTLAIMGCGTLLIALVPG). Topologically, residues 109–111 (YQT) are periplasmic. Residues 112-132 (IGLAAPALVLLGRLLQGFSAG) traverse the membrane as a helical segment. Residues 133–164 (VELGGVSVYLSEIATPGNKGFYTSWQSASQQV) lie on the Cytoplasmic side of the membrane. A helical transmembrane segment spans residues 165–185 (AIVVAALIGYSLNITLGHDAI). Ser186 is a topological domain (periplasmic). The chain crosses the membrane as a helical span at residues 187–207 (EWGWRIPFFIGCMIIPLIFVL). Residues 208 to 238 (RRSLQETEAFLQRKHRPDTREIFATIAKNWR) are Cytoplasmic-facing. Residues 239–259 (IITAGTLLVAMTTTTFYFITV) form a helical membrane-spanning segment. The Periplasmic portion of the chain corresponds to 260 to 276 (YTPTYGRTVLNLSARDS). Residues 277–297 (LIVTMLVGVSNFIWLPIGGAI) form a helical membrane-spanning segment. Residues 298–304 (SDRIGRR) are Cytoplasmic-facing. Residues 305 to 325 (AVLMGITLLALITTWPVMQWL) form a helical membrane-spanning segment. The Periplasmic segment spans residues 326–335 (TAAPDFTRMT). A helical transmembrane segment spans residues 336–356 (LVLLWFSFFFGMYNGAMVAAL). Topologically, residues 357–366 (TEVMPVYVRT) are cytoplasmic. The helical transmembrane segment at 367-387 (VGFSLAFSLATAIFGGLTPAI) threads the bilayer. The Periplasmic segment spans residues 388–400 (STALVKLTGDKSS). A helical transmembrane segment spans residues 401–421 (PGWWLMCAALCGLAATAMLFV). Residues 422–434 (RLSRGYIAAENKA) lie on the Cytoplasmic side of the membrane.

This sequence belongs to the major facilitator superfamily. Metabolite:H+ Symporter (MHS) family (TC 2.A.1.6) family.

The protein localises to the cell inner membrane. Uptake of citrate across the boundary membrane with the concomitant transport of protons into the cell (symport system). The polypeptide is Citrate-proton symporter (citA) (Salmonella typhi).